A 216-amino-acid polypeptide reads, in one-letter code: Putative holocytochrome-c1 synthase (216 aa).

Residues 1 to 46 (MQPEQLNQEEESKCPVPPEVRDAWLKSHGGKKPSEVHDTPHPTMLP) are disordered.

It belongs to the cytochrome c-type heme lyase family.

It is found in the mitochondrion inner membrane. The catalysed reaction is holo-[cytochrome c] = apo-[cytochrome c] + heme b. Its function is as follows. Lyase that catalyzes the covalent linking of the heme group to the cytochrome C1 apoprotein to produce the mature functional cytochrome. The sequence is that of Putative holocytochrome-c1 synthase from Schizosaccharomyces pombe (strain 972 / ATCC 24843) (Fission yeast).